A 268-amino-acid polypeptide reads, in one-letter code: NH(3)-dependent NAD(+) synthetase (268 aa).

Residue 46–53 participates in ATP binding; the sequence is GISGGQDS. Residue Asp-52 participates in Mg(2+) binding. Residue Arg-140 participates in deamido-NAD(+) binding. Thr-160 serves as a coordination point for ATP. A Mg(2+)-binding site is contributed by Glu-165. Deamido-NAD(+) contacts are provided by Lys-173 and Asp-180. Lys-189 and Thr-211 together coordinate ATP. 260-261 is a binding site for deamido-NAD(+); the sequence is HK.

This sequence belongs to the NAD synthetase family. In terms of assembly, homodimer.

It carries out the reaction deamido-NAD(+) + NH4(+) + ATP = AMP + diphosphate + NAD(+) + H(+). It functions in the pathway cofactor biosynthesis; NAD(+) biosynthesis; NAD(+) from deamido-NAD(+) (ammonia route): step 1/1. Functionally, catalyzes the ATP-dependent amidation of deamido-NAD to form NAD. Uses ammonia as a nitrogen source. The polypeptide is NH(3)-dependent NAD(+) synthetase (Buchnera aphidicola subsp. Schizaphis graminum (strain Sg)).